The primary structure comprises 538 residues: (R)-citramalate synthase (538 aa).

In terms of domain architecture, Pyruvate carboxyltransferase spans 3-268 (IKVYDTTLRD…IPKENLKKLF (266 aa)).

It belongs to the alpha-IPM synthase/homocitrate synthase family.

It catalyses the reaction pyruvate + acetyl-CoA + H2O = (3R)-citramalate + CoA + H(+). It functions in the pathway amino-acid biosynthesis; L-isoleucine biosynthesis; 2-oxobutanoate from pyruvate: step 1/3. Its function is as follows. Catalyzes the condensation of pyruvate and acetyl-coenzyme A to form (R)-citramalate. The chain is (R)-citramalate synthase from Thermotoga maritima (strain ATCC 43589 / DSM 3109 / JCM 10099 / NBRC 100826 / MSB8).